The sequence spans 384 residues: Large ribosomal subunit protein uL3m (384 aa).

Disordered stretches follow at residues 80-101 and 237-262; these read NQVTQGLPAPTSGPAAALKRRE and QEASHGNSLNHRTIGSVGGSQGSGSR. A compositionally biased stretch (polar residues) spans 240–249; sequence SHGNSLNHRT.

It belongs to the universal ribosomal protein uL3 family. As to quaternary structure, component of the mitochondrial large ribosomal subunit (mt-LSU). Mature N.crassa 74S mitochondrial ribosomes consist of a small (37S) and a large (54S) subunit. The 37S small subunit contains a 16S ribosomal RNA (16S mt-rRNA) and 32 different proteins. The 54S large subunit contains a 23S rRNA (23S mt-rRNA) and 42 different proteins.

The protein localises to the mitochondrion. Functionally, component of the mitochondrial ribosome (mitoribosome), a dedicated translation machinery responsible for the synthesis of mitochondrial genome-encoded proteins, including at least some of the essential transmembrane subunits of the mitochondrial respiratory chain. The mitoribosomes are attached to the mitochondrial inner membrane and translation products are cotranslationally integrated into the membrane. This chain is Large ribosomal subunit protein uL3m (mrpl9), found in Neurospora crassa (strain ATCC 24698 / 74-OR23-1A / CBS 708.71 / DSM 1257 / FGSC 987).